A 278-amino-acid polypeptide reads, in one-letter code: Indole-3-glycerol phosphate synthase (278 aa).

The protein belongs to the TrpC family.

It carries out the reaction 1-(2-carboxyphenylamino)-1-deoxy-D-ribulose 5-phosphate + H(+) = (1S,2R)-1-C-(indol-3-yl)glycerol 3-phosphate + CO2 + H2O. It participates in amino-acid biosynthesis; L-tryptophan biosynthesis; L-tryptophan from chorismate: step 4/5. The chain is Indole-3-glycerol phosphate synthase from Pseudomonas fluorescens (strain Pf0-1).